A 282-amino-acid chain; its full sequence is uncharacterized protein (282 aa).

One can recognise an HTH rpiR-type domain in the interval 4–80; that stretch reads STLTSKLESL…VDYLSDEKQY (77 aa). Positions 40–59 form a DNA-binding region, H-T-H motif; the sequence is VAELAQAAGVSSASVIRFTR. Positions 125–265 constitute an SIS domain; sequence IAQKIVEAKR…FFKYLTLTNE (141 aa).

This is an uncharacterized protein from Providencia stuartii.